The primary structure comprises 3387 residues: Genome polyprotein (3387 aa).

Residues 1 to 100 are Cytoplasmic-facing; the sequence is MNQRKKVVRP…LNILNGRKRS (100 aa). Residues 36–71 are hydrophobic; homodimerization of capsid protein C; it reads LFSGKGPLRMVLAFITFLRVLSIPPTAGILKRWGQL. Residues 100–113 constitute a propeptide, ER anchor for the capsid protein C, removed in mature form by serine protease NS3; it reads STMTLLCLIPTVMA. The helical transmembrane segment at 101–117 threads the bilayer; it reads TMTLLCLIPTVMAFHLS. Residues 118–237 are Extracellular-facing; sequence TRDGEPLMIV…GAWKHAQRVE (120 aa). N182 carries N-linked (GlcNAc...) asparagine; by host glycosylation. The helical transmembrane segment at 238–258 threads the bilayer; that stretch reads SWILRNPGFALLAGFMAYMIG. The Cytoplasmic portion of the chain corresponds to 259 to 265; the sequence is QTGIQRT. A helical transmembrane segment spans residues 266 to 279; it reads VFFVLMMLVAPSYG. At 280 to 723 the chain is on the extracellular side; the sequence is MRCVGVGNRD…AVHQVFGSVY (444 aa). Cystine bridges form between C282–C309, C339–C400, C353–C384, and C371–C395. N-linked (GlcNAc...) asparagine; by host glycosylation occurs at N346. The segment at 377 to 390 is fusion peptide; that stretch reads DRGWGNGCGLFGKG. N-linked (GlcNAc...) asparagine; by host glycosylation is present at N432. 2 disulfides stabilise this stretch: C464–C564 and C581–C612. A helical transmembrane segment spans residues 724–744; the sequence is TTMFGGVSWMVRILIGFLVLW. Topologically, residues 745–750 are cytoplasmic; sequence IGTNSR. The helical transmembrane segment at 751–771 threads the bilayer; the sequence is NTSMAMTCIAVGGITLFLGFT. The Extracellular segment spans residues 772-1194; sequence VQADMGCVVS…MLGDTMSGRI (423 aa). Cystine bridges form between C778–C789, C829–C917, C953–C997, C1054–C1103, C1065–C1087, and C1086–C1090. 2 N-linked (GlcNAc...) asparagine; by host glycosylation sites follow: N904 and N981. Residues 1195–1218 traverse the membrane as a helical segment; the sequence is GGQVHLAIMAVFKMSPGYVLGVFL. The Lumenal segment spans residues 1219–1224; it reads RKLTSR. A helical transmembrane segment spans residues 1225 to 1243; that stretch reads ETALMVIGMAMTTVLSIPH. The Cytoplasmic segment spans residues 1244-1267; it reads DLMELIDGISLGLILLKIVTQFDN. The helical transmembrane segment at 1268-1288 threads the bilayer; it reads TQVGTLALSLTFIRSTMPLVM. A1289 is a topological domain (lumenal). A helical membrane pass occupies residues 1290-1308; it reads WRTIMAVLFVVTLIPLCRT. Residues 1309-1316 lie on the Lumenal side of the membrane; the sequence is SCLQKQSH. A helical membrane pass occupies residues 1317-1337; the sequence is WVEITALILGAQALPVYLMTL. Residues 1338-1345 are Cytoplasmic-facing; the sequence is MKGASRRS. The chain crosses the membrane as a helical span at residues 1346 to 1366; it reads WPLNEGIMAVGLVSLLGSALL. The Lumenal segment spans residues 1367-1369; it reads KND. A helical transmembrane segment spans residues 1370–1390; sequence VPLAGPMVAGGLLLAAYVMSG. Residues 1391–1437 lie on the Cytoplasmic side of the membrane; it reads SSADLSLEKAANVQWDEMADITGSSPIIEVKQDEDGSFSIRDVEETN. The interval 1397 to 1436 is interacts with and activates NS3 protease; the sequence is LEKAANVQWDEMADITGSSPIIEVKQDEDGSFSIRDVEET. The segment at residues 1438 to 1458 is an intramembrane region (helical); that stretch reads MITLLVKLALITVSGLYPLAI. Residues 1459-2143 lie on the Cytoplasmic side of the membrane; the sequence is PVTMTLWYMW…QHALNELPES (685 aa). A Peptidase S7 domain is found at 1475–1652; it reads SGALWDVPSP…ERIGEPDYEV (178 aa). Catalysis depends on charge relay system; for serine protease NS3 activity residues H1525, D1549, and S1609. The 157-residue stretch at 1654 to 1810 folds into the Helicase ATP-binding domain; it reads EDIFRKKRLT…QSNSPIEDIE (157 aa). Residues 1658-1661 form an important for RNA-binding region; sequence RKKR. 1667–1674 is an ATP binding site; that stretch reads LHPGAGKT. Positions 1758 to 1761 match the DEAH box motif; it reads DEAH. The Helicase C-terminal domain maps to 1820–1987; the sequence is TGFDWITDYQ…IIPTLFGPER (168 aa). K1862 is subject to N6-acetyllysine; by host. The helical transmembrane segment at 2144-2164 threads the bilayer; it reads LETLMLVALLGAMTAGTFLFF. The Lumenal segment spans residues 2165 to 2169; the sequence is MQGKG. Positions 2170 to 2190 form an intramembrane region, helical; the sequence is IGKLSMGLITIAVASGLLWVA. Position 2191 (E2191) is a topological domain, lumenal. The helical transmembrane segment at 2192 to 2212 threads the bilayer; the sequence is LQPQWIAASIILEFFLMVLLI. Over 2213-2225 the chain is Cytoplasmic; the sequence is PEPEKQRTPQDNQ. A helical membrane pass occupies residues 2226-2246; that stretch reads LIYVILTILTIIGLIAANEMG. Residues 2247-2270 are Lumenal-facing; it reads LIEKTKTDFGFYQVKTETTILDVD. Positions 2271-2291 form an intramembrane region, helical; the sequence is LRPASAWTLYAVATTILTPML. Topologically, residues 2292 to 2301 are lumenal; sequence RHTIENTSAN. N2297 and N2301 each carry an N-linked (GlcNAc...) asparagine; by host glycan. Positions 2302 to 2322 form an intramembrane region, helical; that stretch reads LSLAAIANQAAVLMGLGKGWP. The Lumenal portion of the chain corresponds to 2323–2343; it reads LHRVDLGVPLLAMGCYSQVNP. A helical transmembrane segment spans residues 2344-2364; the sequence is TTLTASLVMLLVHYAIIGPGL. Over 2365–2409 the chain is Cytoplasmic; it reads QAKATREAQKRTAAGIMKNPTVDGITVIDLEPISYDPKFEKQLGQ. A helical transmembrane segment spans residues 2410–2430; the sequence is VMLLVLCAGQLLLMRTTWAFC. Residues 2431 to 2455 are Lumenal-facing; it reads EVLTLATGPILTLWEGNPGRFWNTT. An N-linked (GlcNAc...) asparagine; by host glycan is attached at N2453. Residues 2456–2476 traverse the membrane as a helical segment; that stretch reads IAVSTANIFRGSYLAGAGLAF. Residues 2477–3387 are Cytoplasmic-facing; it reads SLIKNAQTPR…SAPSESEGVL (911 aa). The mRNA cap 0-1 NS5-type MT domain maps to 2489–2751; the sequence is TGTTGETLGE…DVDLGAGTRS (263 aa). Residue S2543 participates in S-adenosyl-L-methionine binding. S2543 carries the post-translational modification Phosphoserine. Catalysis depends on K2548, which acts as the For 2'-O-MTase activity. The SUMO-interacting motif motif lies at 2564–2567; it reads VVDL. Residues G2573, W2574, T2591, K2592, D2618, and V2619 each coordinate S-adenosyl-L-methionine. The For 2'-O-MTase activity role is filled by D2633. Position 2634 (I2634) interacts with S-adenosyl-L-methionine. Catalysis depends on for 2'-O-MTase activity residues K2668 and E2704. An S-adenosyl-L-methionine-binding site is contributed by Y2706. Zn(2+) contacts are provided by E2925, H2929, C2934, and C2937. One can recognise a RdRp catalytic domain in the interval 3016–3166; sequence LMYADDTAGW…PLDERFSTSL (151 aa). Zn(2+) is bound by residues H3200, C3216, and C3335.

It in the N-terminal section; belongs to the class I-like SAM-binding methyltransferase superfamily. mRNA cap 0-1 NS5-type methyltransferase family. As to quaternary structure, homodimer. Interacts (via N-terminus) with host EXOC1 (via C-terminus); this interaction results in EXOC1 degradation through the proteasome degradation pathway. In terms of assembly, forms heterodimers with envelope protein E in the endoplasmic reticulum and Golgi. Homodimer; in the endoplasmic reticulum and Golgi. Interacts with protein prM. Interacts with non-structural protein 1. As to quaternary structure, homodimer; Homohexamer when secreted. Interacts with envelope protein E. In terms of assembly, interacts (via N-terminus) with serine protease NS3. Forms a heterodimer with serine protease NS3. May form homooligomers. As to quaternary structure, forms a heterodimer with NS2B. Interacts with NS4B. Interacts with unphosphorylated RNA-directed RNA polymerase NS5; this interaction stimulates RNA-directed RNA polymerase NS5 guanylyltransferase activity. Interacts with host SHFL. In terms of assembly, interacts with host MAVS; this interaction inhibits the synthesis of IFN-beta. Interacts with host SHFL. Interacts with host AUP1; the interaction occurs in the presence of Dengue virus NS4B and induces lipophagy which facilitates production of virus progeny particles. Interacts with serine protease NS3. As to quaternary structure, homodimer. Interacts with host STAT2; this interaction inhibits the phosphorylation of the latter, and, when all viral proteins are present (polyprotein), targets STAT2 for degradation. Interacts with serine protease NS3. Interacts with host PAF1 complex; the interaction may prevent the recruitment of the PAF1 complex to interferon-responsive genes, and thus reduces the immune response. In terms of processing, specific enzymatic cleavages in vivo yield mature proteins. Cleavages in the lumen of endoplasmic reticulum are performed by host signal peptidase, whereas cleavages in the cytoplasmic side are performed by serine protease NS3. Signal cleavage at the 2K-4B site requires a prior NS3 protease-mediated cleavage at the 4A-2K site. Cleaved in post-Golgi vesicles by a host furin, releasing the mature small envelope protein M, and peptide pr. This cleavage is incomplete as up to 30% of viral particles still carry uncleaved prM. Post-translationally, N-glycosylated. In terms of processing, N-glycosylated. The excreted form is glycosylated and this is required for efficient secretion of the protein from infected cells. Acetylated by host KAT5. Acetylation modulates NS3 RNA-binding and unwinding activities and plays an important positive role for viral replication. Post-translationally, sumoylation of RNA-directed RNA polymerase NS5 increases NS5 protein stability allowing proper viral RNA replication. In terms of processing, phosphorylated on serines residues. This phosphorylation may trigger NS5 nuclear localization.

The protein localises to the virion. The protein resides in the host nucleus. It localises to the host cytoplasm. It is found in the host perinuclear region. Its subcellular location is the secreted. The protein localises to the virion membrane. The protein resides in the host endoplasmic reticulum membrane. It localises to the host mitochondrion. It carries out the reaction Selective hydrolysis of -Xaa-Xaa-|-Yaa- bonds in which each of the Xaa can be either Arg or Lys and Yaa can be either Ser or Ala.. The catalysed reaction is RNA(n) + a ribonucleoside 5'-triphosphate = RNA(n+1) + diphosphate. It catalyses the reaction a ribonucleoside 5'-triphosphate + H2O = a ribonucleoside 5'-diphosphate + phosphate + H(+). The enzyme catalyses ATP + H2O = ADP + phosphate + H(+). It carries out the reaction a 5'-end (5'-triphosphoguanosine)-ribonucleoside in mRNA + S-adenosyl-L-methionine = a 5'-end (N(7)-methyl 5'-triphosphoguanosine)-ribonucleoside in mRNA + S-adenosyl-L-homocysteine. The catalysed reaction is a 5'-end (N(7)-methyl 5'-triphosphoguanosine)-ribonucleoside in mRNA + S-adenosyl-L-methionine = a 5'-end (N(7)-methyl 5'-triphosphoguanosine)-(2'-O-methyl-ribonucleoside) in mRNA + S-adenosyl-L-homocysteine + H(+). Its function is as follows. Plays a role in virus budding by binding to the cell membrane and gathering the viral RNA into a nucleocapsid that forms the core of a mature virus particle. During virus entry, may induce genome penetration into the host cytoplasm after hemifusion induced by the surface proteins. Can migrate to the cell nucleus where it modulates host functions. Overcomes the anti-viral effects of host EXOC1 by sequestering and degrading the latter through the proteasome degradation pathway. Functionally, inhibits RNA silencing by interfering with host Dicer. In terms of biological role, prevents premature fusion activity of envelope proteins in trans-Golgi by binding to envelope protein E at pH6.0. After virion release in extracellular space, gets dissociated from E dimers. Acts as a chaperone for envelope protein E during intracellular virion assembly by masking and inactivating envelope protein E fusion peptide. prM is the only viral peptide matured by host furin in the trans-Golgi network probably to avoid catastrophic activation of the viral fusion activity in acidic Golgi compartment prior to virion release. prM-E cleavage is inefficient, and many virions are only partially matured. These uncleaved prM would play a role in immune evasion. Its function is as follows. May play a role in virus budding. Exerts cytotoxic effects by activating a mitochondrial apoptotic pathway through M ectodomain. May display a viroporin activity. Functionally, binds to host cell surface receptor and mediates fusion between viral and cellular membranes. Envelope protein is synthesized in the endoplasmic reticulum in the form of heterodimer with protein prM. They play a role in virion budding in the ER, and the newly formed immature particle is covered with 60 spikes composed of heterodimer between precursor prM and envelope protein E. The virion is transported to the Golgi apparatus where the low pH causes dissociation of PrM-E heterodimers and formation of E homodimers. prM-E cleavage is inefficient, and many virions are only partially matured. These uncleaved prM would play a role in immune evasion. In terms of biological role, involved in immune evasion, pathogenesis and viral replication. Once cleaved off the polyprotein, is targeted to three destinations: the viral replication cycle, the plasma membrane and the extracellular compartment. Essential for viral replication. Required for formation of the replication complex and recruitment of other non-structural proteins to the ER-derived membrane structures. Excreted as a hexameric lipoparticle that plays a role against host immune response. Antagonizing the complement function. Binds to the host macrophages and dendritic cells. Inhibits signal transduction originating from Toll-like receptor 3 (TLR3). Disrupts the host endothelial glycocalyx layer of host pulmonary microvascular endothelial cells, inducing degradation of sialic acid and shedding of heparan sulfate proteoglycans. NS1 induces expression of sialidases, heparanase, and activates cathepsin L, which activates heparanase via enzymatic cleavage. These effects are probably linked to the endothelial hyperpermeability observed in severe dengue disease. Its function is as follows. Component of the viral RNA replication complex that functions in virion assembly and antagonizes the host immune response. Functionally, required cofactor for the serine protease function of NS3. May have membrane-destabilizing activity and form viroporins. In terms of biological role, displays three enzymatic activities: serine protease, NTPase and RNA helicase. NS3 serine protease, in association with NS2B, performs its autocleavage and cleaves the polyprotein at dibasic sites in the cytoplasm: C-prM, NS2A-NS2B, NS2B-NS3, NS3-NS4A, NS4A-2K and NS4B-NS5. NS3 RNA helicase binds RNA and unwinds dsRNA in the 3' to 5' direction. Regulates the ATPase activity of the NS3 helicase activity. NS4A allows NS3 helicase to conserve energy during unwinding. Plays a role in the inhibition of the host innate immune response. Interacts with host MAVS and thereby prevents the interaction between RIGI and MAVS. In turn, IFN-beta production is impaired. Interacts with host AUP1 which mediates induction of lipophagy in host cells and facilitates production of virus progeny particles. Its function is as follows. Functions as a signal peptide for NS4B and is required for the interferon antagonism activity of the latter. Functionally, induces the formation of ER-derived membrane vesicles where the viral replication takes place. Inhibits interferon (IFN)-induced host STAT1 phosphorylation and nuclear translocation, thereby preventing the establishment of cellular antiviral state by blocking the IFN-alpha/beta pathway. In terms of biological role, replicates the viral (+) and (-) RNA genome, and performs the capping of genomes in the cytoplasm. NS5 methylates viral RNA cap at guanine N-7 and ribose 2'-O positions. Besides its role in RNA genome replication, also prevents the establishment of cellular antiviral state by blocking the interferon-alpha/beta (IFN-alpha/beta) signaling pathway. Inhibits host TYK2 and STAT2 phosphorylation, thereby preventing activation of JAK-STAT signaling pathway. May reduce immune responses by preventing the recruitment of the host PAF1 complex to interferon-responsive genes. The chain is Genome polyprotein from Dengue virus type 4 (strain Singapore/8976/1995) (DENV-4).